Consider the following 471-residue polypeptide: tRNA-2-methylthio-N(6)-dimethylallyladenosine synthase (471 aa).

In terms of domain architecture, MTTase N-terminal spans 33–151 (KKYMITTYGC…FPELLSRSME (119 aa)). [4Fe-4S] cluster is bound by residues Cys-42, Cys-78, Cys-112, Cys-188, Cys-192, and Cys-195. A Radical SAM core domain is found at 174 to 404 (RKYDLKGFIN…LDKVNEISAE (231 aa)). Positions 407-470 (QSYLNKVVEV…TFSLNGEVIQ (64 aa)) constitute a TRAM domain.

Belongs to the methylthiotransferase family. MiaB subfamily. Monomer. [4Fe-4S] cluster is required as a cofactor.

It localises to the cytoplasm. The enzyme catalyses N(6)-dimethylallyladenosine(37) in tRNA + (sulfur carrier)-SH + AH2 + 2 S-adenosyl-L-methionine = 2-methylsulfanyl-N(6)-dimethylallyladenosine(37) in tRNA + (sulfur carrier)-H + 5'-deoxyadenosine + L-methionine + A + S-adenosyl-L-homocysteine + 2 H(+). Its function is as follows. Catalyzes the methylthiolation of N6-(dimethylallyl)adenosine (i(6)A), leading to the formation of 2-methylthio-N6-(dimethylallyl)adenosine (ms(2)i(6)A) at position 37 in tRNAs that read codons beginning with uridine. In Alkaliphilus oremlandii (strain OhILAs) (Clostridium oremlandii (strain OhILAs)), this protein is tRNA-2-methylthio-N(6)-dimethylallyladenosine synthase.